The following is a 221-amino-acid chain: Serine/arginine-rich splicing factor 2 (221 aa).

Residues 14–92 (TSLKVDNLTY…RELRVQMARY (79 aa)) enclose the RRM domain. Residues 91–221 (RYGRPPDSHH…SPEEEGAVSS (131 aa)) form a disordered region. 2 stretches are compositionally biased toward basic residues: residues 117-171 (RRSR…RSKS) and 179-189 (SRSRSRSRSRS).

This sequence belongs to the splicing factor SR family. In terms of processing, extensively phosphorylated on serine residues in the RS domain.

The protein localises to the nucleus. In terms of biological role, necessary for the splicing of pre-mRNA. It is required for formation of the earliest ATP-dependent splicing complex and interacts with spliceosomal components bound to both the 5'- and 3'-splice sites during spliceosome assembly. It also is required for ATP-dependent interactions of both U1 and U2 snRNPs with pre-mRNA. The chain is Serine/arginine-rich splicing factor 2 (SRSF2) from Gallus gallus (Chicken).